A 178-amino-acid polypeptide reads, in one-letter code: Probable major fimbrial subunit LpfA (178 aa).

The first 24 residues, 1–24 (MEFFMKKVVFALTALALTSGTVFA), serve as a signal peptide directing secretion.

The protein belongs to the fimbrial protein family.

It is found in the fimbrium. Functionally, part of the lpfABCC'DE fimbrial operon. LP fimbriae may participate in the interaction with eukaryotic cells by assisting in microcolony formation. This Escherichia coli O157:H7 protein is Probable major fimbrial subunit LpfA (lpfA).